The following is a 630-amino-acid chain: Subtilisin-like protease 1 (630 aa).

Positions 1–25 (MVLTRRAALLLCPWVIQLVIKRTLA) are cleaved as a signal peptide. The propeptide at 26–202 (GDILPNEGKK…IESDKLVGAD (177 aa)) is inhibition peptide. Residues 72 to 125 (NAYNPDRDAPKEELQKLQDQQETPSKQPNNLRNSPQKRAEKKESPGKNKKSLRL) are disordered. Residues 76–87 (PDRDAPKEELQK) show a composition bias toward basic and acidic residues. Positions 94 to 107 (TPSKQPNNLRNSPQ) are enriched in polar residues. Residues 108–117 (KRAEKKESPG) are compositionally biased toward basic and acidic residues. Ca(2+) is bound by residues Glu129, Asn130, Thr133, Pro135, and Gly190. The segment at 230–254 (LEVPSGESPPSHAASSGSPFDDDDD) is disordered. Over residues 233–248 (PSGESPPSHAASSGSP) the composition is skewed to low complexity. Residue Asp281 participates in Ca(2+) binding. In terms of domain architecture, Peptidase S8 spans 287–604 (QWGLDLARLD…GGYVDILRAV (318 aa)). 3 disulfides stabilise this stretch: Cys313-Cys423, Cys402-Cys419, and Cys465-Cys478. Asp316 functions as the Charge relay system in the catalytic mechanism. Ca(2+)-binding residues include Asp325, Glu336, Arg340, Val343, Asp344, Asp345, Asp346, Asn348, Val350, Asp352, and Asp353. Catalysis depends on His372, which acts as the Charge relay system. Residues Val383, Asn386, Ile388, and Ile390 each coordinate Ca(2+). N-linked (GlcNAc...) asparagine glycosylation occurs at Asn546. Ser549 (charge relay system) is an active-site residue.

It belongs to the peptidase S8 family. In terms of assembly, heterodimer between p54 form and prodomain p31; the interaction inhibits p54 catalytic activity. Heterodimer p31-p54 is monomeric at basic pH and dimeric at acidic pH; dimerization is driven by the N-terminal prodomain (p31). The cofactor is Ca(2+). Post-translationally, the prodomain (p31) is cleaved, probably by autocatalysis, and remains non-covalently associated with the p54 form as an inhibitor. p54 is further cleaved into the p45/p47 forms. In terms of processing, the relevance of the N-glycosylation is not clear. In an insect expression system, SUB1 glycosylation appears to affect its processing into the active mature form suggesting that SUB1 may not be N-glycosylated in parasites.

It is found in the secreted. It localises to the parasitophorous vacuole lumen. The enzyme catalyses Hydrolysis of proteins with broad specificity for peptide bonds, and a preference for a large uncharged residue in P1. Hydrolyzes peptide amides.. Its activity is regulated as follows. Inhibited by peptidic alpha-ketoamide inhibitors. Inhibited by the alpha-ketoamide nonapeptide JMV5126 (isocaproyl-KITAQ(CO)DDEE-NH2). Inhibited by the alpha-ketoamide peptide MAM-117. Serine protease which plays an essential role in merozoite invasion of and egress from host erythrocytes by processing and activating various merozoite surface and parasitophorous vacuole proteins. The polypeptide is Subtilisin-like protease 1 (Plasmodium vivax).